A 122-amino-acid chain; its full sequence is Large ribosomal subunit protein bL12 (122 aa).

Belongs to the bacterial ribosomal protein bL12 family. In terms of assembly, homodimer. Part of the ribosomal stalk of the 50S ribosomal subunit. Forms a multimeric L10(L12)X complex, where L10 forms an elongated spine to which 2 to 4 L12 dimers bind in a sequential fashion. Binds GTP-bound translation factors.

Its function is as follows. Forms part of the ribosomal stalk which helps the ribosome interact with GTP-bound translation factors. Is thus essential for accurate translation. The polypeptide is Large ribosomal subunit protein bL12 (Borrelia hermsii (strain HS1 / DAH)).